Consider the following 355-residue polypeptide: Guanine nucleotide-binding protein G(i) subunit alpha-2 (355 aa).

G2 carries N-myristoyl glycine lipidation. C3 carries S-palmitoyl cysteine lipidation. In terms of domain architecture, G-alpha spans 32-355; sequence REVKLLLLGA…KNNLKDCGLF (324 aa). The tract at residues 35-48 is G1 motif; that stretch reads KLLLLGAGESGKST. Residues 40–47, 176–182, 201–205, 270–273, and A327 contribute to the GTP site; these read GAGESGKS, LRTRVKT, DVGGQ, and NKKD. S47 and T182 together coordinate Mg(2+). The segment at 174–182 is G2 motif; that stretch reads DVLRTRVKT. A G3 motif region spans residues 197 to 206; it reads FKMFDVGGQR. Residues 266–273 form a G4 motif region; it reads ILFLNKKD. Residues 325–330 form a G5 motif region; it reads TCATDT.

This sequence belongs to the G-alpha family. G(i/o/t/z) subfamily. In terms of assembly, g proteins are composed of 3 units; alpha, beta and gamma. The alpha chain contains the guanine nucleotide binding site.

It localises to the cytoplasm. It is found in the cytoskeleton. The protein resides in the microtubule organizing center. The protein localises to the centrosome. Its subcellular location is the cell membrane. Functionally, guanine nucleotide-binding proteins (G proteins) are involved as modulators or transducers in various transmembrane signaling systems. The G(i) proteins are involved in hormonal regulation of adenylate cyclase: they inhibit the cyclase in response to beta-adrenergic stimuli. May play a role in cell division. In Gallus gallus (Chicken), this protein is Guanine nucleotide-binding protein G(i) subunit alpha-2 (GNAI2).